Reading from the N-terminus, the 128-residue chain is UPF0102 protein RPB_0420 (128 aa).

It belongs to the UPF0102 family.

The protein is UPF0102 protein RPB_0420 of Rhodopseudomonas palustris (strain HaA2).